The primary structure comprises 267 residues: Lectin SfL-2 (267 aa).

Tandem repeats lie at residues G1–E67, S68–G135, D136–A202, and N203–N267. Residues G1–N267 form a 4 X approximate tandem repeats region.

Monomer.

Functionally, lectin specific for high mannose N-glycans, recognizes the branched moiety of these glycans. Does not recognize other types of N-glycans or monosaccharides. In Solieria filiformis (Red alga), this protein is Lectin SfL-2.